We begin with the raw amino-acid sequence, 526 residues long: Probable feruloyl esterase B-2 (526 aa).

The signal sequence occupies residues 1-19 (MPSLRRLLPFLAAGSAALA). Intrachain disulfides connect cysteine 28–cysteine 75 and cysteine 63–cysteine 114. Asparagine 53, asparagine 85, asparagine 98, and asparagine 138 each carry an N-linked (GlcNAc...) asparagine glycan. 3 disulfide bridges follow: cysteine 187-cysteine 441, cysteine 256-cysteine 273, and cysteine 282-cysteine 291. The active-site Acyl-ester intermediate is serine 188. The N-linked (GlcNAc...) asparagine glycan is linked to asparagine 246. Positions 257, 260, 262, 264, and 266 each coordinate Ca(2+). Asparagine 287 and asparagine 311 each carry an N-linked (GlcNAc...) asparagine glycan. Catalysis depends on charge relay system residues aspartate 400 and histidine 440. Residues asparagine 490 and asparagine 516 are each glycosylated (N-linked (GlcNAc...) asparagine). A disulfide bridge links cysteine 503 with cysteine 525.

Belongs to the tannase family.

The protein resides in the secreted. It catalyses the reaction feruloyl-polysaccharide + H2O = ferulate + polysaccharide.. Involved in degradation of plant cell walls. Hydrolyzes the feruloyl-arabinose ester bond in arabinoxylans as well as the feruloyl-galactose and feruloyl-arabinose ester bonds in pectin. The sequence is that of Probable feruloyl esterase B-2 (faeB-2) from Aspergillus oryzae (strain ATCC 42149 / RIB 40) (Yellow koji mold).